Consider the following 353-residue polypeptide: Protein CEPU-1 (353 aa).

The signal sequence occupies residues 1 to 28 (MAQAKMQHPVSWVIFAGMAALLLFQGVP). Ig-like C2-type domains are found at residues 37–124 (PKAM…PKTS), 134–216 (PKIT…VKVT), and 220–314 (PPYI…ETTT). Asn42, Asn68, and Asn150 each carry an N-linked (GlcNAc...) asparagine glycan. The cysteines at positions 55 and 113 are disulfide-linked. 2 disulfides stabilise this stretch: Cys155-Cys199 and Cys241-Cys293. Residues Asn282, Asn290, and Asn303 are each glycosylated (N-linked (GlcNAc...) asparagine). Ser330 carries the GPI-anchor amidated serine lipid modification. Residues 331–353 (GAWRRGSCAWLLALPLAQLARQF) constitute a propeptide, removed in mature form.

Belongs to the immunoglobulin superfamily. IgLON family. In terms of assembly, interacts with NEGR1. Found on the dendrites, somata and axons of developing Purkinje cells. Undetectable on other neurons like Golgi or granule cells.

It localises to the cell membrane. Functionally, it may be a cellular address molecule specific to Purkinje cells. It may represent a receptor or a subunit of a receptor complex. The sequence is that of Protein CEPU-1 from Gallus gallus (Chicken).